A 660-amino-acid chain; its full sequence is UvrABC system protein C (660 aa).

The GIY-YIG domain maps to Glu-16–Val-95. Residues Asp-208–Ala-243 form the UVR domain. Positions Gly-469 to Thr-501 are disordered. Positions Ala-476–Asp-486 are enriched in low complexity.

This sequence belongs to the UvrC family. As to quaternary structure, interacts with UvrB in an incision complex.

It is found in the cytoplasm. Functionally, the UvrABC repair system catalyzes the recognition and processing of DNA lesions. UvrC both incises the 5' and 3' sides of the lesion. The N-terminal half is responsible for the 3' incision and the C-terminal half is responsible for the 5' incision. The protein is UvrABC system protein C of Salinispora arenicola (strain CNS-205).